A 441-amino-acid polypeptide reads, in one-letter code: NADH-quinone oxidoreductase subunit D (441 aa).

This sequence belongs to the complex I 49 kDa subunit family. NDH-1 is composed of 14 different subunits. Subunits NuoB, C, D, E, F, and G constitute the peripheral sector of the complex.

Its subcellular location is the cell membrane. The enzyme catalyses a quinone + NADH + 5 H(+)(in) = a quinol + NAD(+) + 4 H(+)(out). Functionally, NDH-1 shuttles electrons from NADH, via FMN and iron-sulfur (Fe-S) centers, to quinones in the respiratory chain. The immediate electron acceptor for the enzyme in this species is believed to be a menaquinone. Couples the redox reaction to proton translocation (for every two electrons transferred, four hydrogen ions are translocated across the cytoplasmic membrane), and thus conserves the redox energy in a proton gradient. The polypeptide is NADH-quinone oxidoreductase subunit D (Mycobacterium avium (strain 104)).